The chain runs to 309 residues: Formimidoylglutamase (309 aa).

Residues histidine 120, aspartate 145, histidine 147, aspartate 149, aspartate 236, and aspartate 238 each contribute to the Mn(2+) site.

Belongs to the arginase family. It depends on Mn(2+) as a cofactor.

It carries out the reaction N-formimidoyl-L-glutamate + H2O = formamide + L-glutamate. Its pathway is amino-acid degradation; L-histidine degradation into L-glutamate; L-glutamate from N-formimidoyl-L-glutamate (hydrolase route): step 1/1. In terms of biological role, catalyzes the conversion of N-formimidoyl-L-glutamate to L-glutamate and formamide. This Chromobacterium violaceum (strain ATCC 12472 / DSM 30191 / JCM 1249 / CCUG 213 / NBRC 12614 / NCIMB 9131 / NCTC 9757 / MK) protein is Formimidoylglutamase.